Consider the following 334-residue polypeptide: Formamidase (334 aa).

Residues 14-260 (FLVAAIQFPV…WEIVTGEIYP (247 aa)) enclose the CN hydrolase domain. The Proton acceptor role is filled by Glu60. Lys133 (proton donor) is an active-site residue. The Nucleophile role is filled by Cys166.

Belongs to the carbon-nitrogen hydrolase superfamily. Aliphatic amidase family.

The enzyme catalyses formamide + H2O = formate + NH4(+). Its function is as follows. Is an aliphatic amidase with a restricted substrate specificity, as it only hydrolyzes formamide. This is Formamidase from Helicobacter pylori (strain J99 / ATCC 700824) (Campylobacter pylori J99).